Consider the following 448-residue polypeptide: GTPase Der (448 aa).

EngA-type G domains are found at residues F2–Q171 and P181–S364. GTP-binding positions include G8–S15, D58–F62, N123–D126, G187–S194, D234–I238, and N305–D308. Residues K365–K448 enclose the KH-like domain.

Belongs to the TRAFAC class TrmE-Era-EngA-EngB-Septin-like GTPase superfamily. EngA (Der) GTPase family. In terms of assembly, associates with the 50S ribosomal subunit.

GTPase that plays an essential role in the late steps of ribosome biogenesis. This Thermodesulfovibrio yellowstonii (strain ATCC 51303 / DSM 11347 / YP87) protein is GTPase Der.